A 139-amino-acid polypeptide reads, in one-letter code: D-ribose pyranase (139 aa).

Residue His-20 is the Proton donor of the active site. Substrate is bound by residues Asp-28, His-106, and Tyr-128 to Asn-130.

It belongs to the RbsD / FucU family. RbsD subfamily. Homodecamer.

The protein resides in the cytoplasm. The catalysed reaction is beta-D-ribopyranose = beta-D-ribofuranose. It functions in the pathway carbohydrate metabolism; D-ribose degradation; D-ribose 5-phosphate from beta-D-ribopyranose: step 1/2. In terms of biological role, catalyzes the interconversion of beta-pyran and beta-furan forms of D-ribose. In Aeromonas hydrophila subsp. hydrophila (strain ATCC 7966 / DSM 30187 / BCRC 13018 / CCUG 14551 / JCM 1027 / KCTC 2358 / NCIMB 9240 / NCTC 8049), this protein is D-ribose pyranase.